Reading from the N-terminus, the 373-residue chain is Response regulator aspartate phosphatase J (373 aa).

TPR repeat units follow at residues 99–135 (YYFY…VEDE) and 146–179 (AEVY…GRRR). The L-glutamyl-L-arginyl-glycyl-L-methionyl-L-threonine site is built by glutamate 147, tyrosine 150, glutamine 181, aspartate 192, tyrosine 217, asparagine 225, histidine 228, glutamine 260, tyrosine 297, lysine 300, and aspartate 335. TPR repeat units lie at residues 220–253 (AAAY…FEEH) and 259–292 (VQAV…AAEW). A TPR 5 repeat occupies 334-367 (EDLLHDTAERFNQLEHYESAAFFYRRLMNIKKKL).

This sequence belongs to the Rap family. Monomer in solution. Homodimer.

It localises to the cytoplasm. Inhibited in vitro by the competence and sporulation stimulating factor (CSF), encoded by phrC. However, CSF has at least three targets (RapB, RapC, and RapJ) and the physiological importance of RapJ inhibition by CSF is unknown. Interaction with CSF induces a conformational change in RapJ. In terms of biological role, involved in the regulation of sporulation. Acts as a phosphatase that specifically dephosphorylates the sporulation initiation phosphotransferase Spo0F and inhibits its activity. The sequence is that of Response regulator aspartate phosphatase J (rapJ) from Bacillus subtilis (strain 168).